The chain runs to 136 residues: Aspartate 1-decarboxylase (136 aa).

The active-site Schiff-base intermediate with substrate; via pyruvic acid is the Ser25. Ser25 is subject to Pyruvic acid (Ser). A substrate-binding site is contributed by Thr57. The Proton donor role is filled by Tyr58. 73-75 (GAA) serves as a coordination point for substrate.

It belongs to the PanD family. Heterooctamer of four alpha and four beta subunits. Pyruvate is required as a cofactor. In terms of processing, is synthesized initially as an inactive proenzyme, which is activated by self-cleavage at a specific serine bond to produce a beta-subunit with a hydroxyl group at its C-terminus and an alpha-subunit with a pyruvoyl group at its N-terminus.

Its subcellular location is the cytoplasm. It catalyses the reaction L-aspartate + H(+) = beta-alanine + CO2. The protein operates within cofactor biosynthesis; (R)-pantothenate biosynthesis; beta-alanine from L-aspartate: step 1/1. Functionally, catalyzes the pyruvoyl-dependent decarboxylation of aspartate to produce beta-alanine. This Corynebacterium glutamicum (strain R) protein is Aspartate 1-decarboxylase.